A 346-amino-acid polypeptide reads, in one-letter code: NADH-ubiquinone oxidoreductase chain 2 (346 aa).

The next 11 helical transmembrane spans lie at 3 to 23 (PLIFTTILMTVLLGTMIVMMS), 25 to 45 (HWLMIWIGFEMNLLAIIPILM), 59 to 79 (YFLTQATASMLLMMAIIINLM), 96 to 116 (IIMTSALAMKLGLTPFHFWVP), 122 to 142 (ISLTSGLILLTWQKLAPMSIL), 149 to 169 (INLNILLTMAVLSILVGGWGG), 178 to 198 (IMAYSSIAHMGWMTAVLVYNP), 200 to 220 (LTMLNMLIYIMMTLTMFMLFI), 242 to 262 (TLILITLLSMGGLPPLSGFMP), 274 to 294 (SSIILPTLMAIMALLNLYFYM), and 322 to 342 (ITLLPPLIVMSSLLLPLTPML).

The protein belongs to the complex I subunit 2 family. Core subunit of respiratory chain NADH dehydrogenase (Complex I) which is composed of 45 different subunits. Interacts with TMEM242.

It is found in the mitochondrion inner membrane. The catalysed reaction is a ubiquinone + NADH + 5 H(+)(in) = a ubiquinol + NAD(+) + 4 H(+)(out). Core subunit of the mitochondrial membrane respiratory chain NADH dehydrogenase (Complex I) which catalyzes electron transfer from NADH through the respiratory chain, using ubiquinone as an electron acceptor. Essential for the catalytic activity and assembly of complex I. The sequence is that of NADH-ubiquinone oxidoreductase chain 2 from Equus caballus (Horse).